A 205-amino-acid chain; its full sequence is ATP phosphoribosyltransferase (205 aa).

The protein belongs to the ATP phosphoribosyltransferase family. Short subfamily. As to quaternary structure, heteromultimer composed of HisG and HisZ subunits.

It localises to the cytoplasm. It carries out the reaction 1-(5-phospho-beta-D-ribosyl)-ATP + diphosphate = 5-phospho-alpha-D-ribose 1-diphosphate + ATP. The protein operates within amino-acid biosynthesis; L-histidine biosynthesis; L-histidine from 5-phospho-alpha-D-ribose 1-diphosphate: step 1/9. In terms of biological role, catalyzes the condensation of ATP and 5-phosphoribose 1-diphosphate to form N'-(5'-phosphoribosyl)-ATP (PR-ATP). Has a crucial role in the pathway because the rate of histidine biosynthesis seems to be controlled primarily by regulation of HisG enzymatic activity. The sequence is that of ATP phosphoribosyltransferase from Staphylococcus carnosus (strain TM300).